The primary structure comprises 136 residues: MILGIGTDLCDIRRIESSLERFGDRFTHRVFTDGERGKCDQRAARGPSYARRFAAKEACAKALGTGMSQGVFWRDMEVVNLPSGQPTLNLTGGAREQLARMVPAGHEARLHLTLTDEPPLAQAFVIIEAVPITATS.

Aspartate 8 and glutamate 57 together coordinate Mg(2+).

The protein belongs to the P-Pant transferase superfamily. AcpS family. Mg(2+) serves as cofactor.

The protein resides in the cytoplasm. The catalysed reaction is apo-[ACP] + CoA = holo-[ACP] + adenosine 3',5'-bisphosphate + H(+). Functionally, transfers the 4'-phosphopantetheine moiety from coenzyme A to a Ser of acyl-carrier-protein. This is Holo-[acyl-carrier-protein] synthase from Methylorubrum extorquens (strain PA1) (Methylobacterium extorquens).